Reading from the N-terminus, the 844-residue chain is DNA mismatch repair protein MutS (844 aa).

Gly-610–Ser-617 is an ATP binding site.

Belongs to the DNA mismatch repair MutS family.

This protein is involved in the repair of mismatches in DNA. It is possible that it carries out the mismatch recognition step. This protein has a weak ATPase activity. This chain is DNA mismatch repair protein MutS, found in Francisella tularensis subsp. novicida (strain U112).